Reading from the N-terminus, the 345-residue chain is GTPase Obg (345 aa).

Residues 1–159 (MRFIDEASIT…FHLKLELKLL (159 aa)) form the Obg domain. One can recognise an OBG-type G domain in the interval 160–329 (ADVGIVGLPN…LIQILARQIA (170 aa)). GTP-binding positions include 166-173 (GLPNAGKS), 191-195 (FTTLT), 213-216 (DIPG), 283-286 (NKID), and 310-312 (SAA). The Mg(2+) site is built by serine 173 and threonine 193.

It belongs to the TRAFAC class OBG-HflX-like GTPase superfamily. OBG GTPase family. In terms of assembly, monomer. Mg(2+) serves as cofactor.

It localises to the cytoplasm. An essential GTPase which binds GTP, GDP and possibly (p)ppGpp with moderate affinity, with high nucleotide exchange rates and a fairly low GTP hydrolysis rate. Plays a role in control of the cell cycle, stress response, ribosome biogenesis and in those bacteria that undergo differentiation, in morphogenesis control. The protein is GTPase Obg of Desulforapulum autotrophicum (strain ATCC 43914 / DSM 3382 / VKM B-1955 / HRM2) (Desulfobacterium autotrophicum).